The chain runs to 157 residues: V-type proton ATPase 16 kDa proteolipid subunit c (157 aa).

At M1–Y10 the chain is on the lumenal side. A helical transmembrane segment spans residues G11 to G33. At T34 to S55 the chain is on the cytoplasmic side. Residues I56–I76 form a helical membrane-spanning segment. Residues A77–H94 lie on the Lumenal side of the membrane. The helical transmembrane segment at L95–G116 threads the bilayer. At D117 to R128 the chain is on the cytoplasmic side. The chain crosses the membrane as a helical span at residues L129–L154. Topologically, residues Y155–K157 are lumenal.

This sequence belongs to the V-ATPase proteolipid subunit family. In terms of assembly, V-ATPase is a heteromultimeric enzyme made up of two complexes: the ATP-hydrolytic V1 complex and the proton translocation V0 complex. The V1 complex consists of three catalytic AB heterodimers that form a heterohexamer, three peripheral stalks each consisting of EG heterodimers, one central rotor including subunits D and F, and the regulatory subunits C and H. The proton translocation complex V0 consists of the proton transport subunit a, a ring of proteolipid subunits c9c'', rotary subunit d, subunits e and f, and the accessory subunits VhaAC45 and ATP6AP2.

The protein localises to the membrane. In terms of biological role, proton-conducting pore forming subunit of the V0 complex of vacuolar(H+)-ATPase (V-ATPase), a multisubunit enzyme composed of a peripheral complex (V1) that hydrolyzes ATP and a membrane integral complex (V0) that translocates protons. V-ATPase is responsible for acidifying and maintaining the pH of intracellular compartments and in some cell types, is targeted to the plasma membrane, where it is responsible for acidifying the extracellular environment. This is V-type proton ATPase 16 kDa proteolipid subunit c from Aedes aegypti (Yellowfever mosquito).